The primary structure comprises 188 residues: Adenine phosphoribosyltransferase (188 aa).

The protein belongs to the purine/pyrimidine phosphoribosyltransferase family. Homodimer.

The protein localises to the cytoplasm. The catalysed reaction is AMP + diphosphate = 5-phospho-alpha-D-ribose 1-diphosphate + adenine. It functions in the pathway purine metabolism; AMP biosynthesis via salvage pathway; AMP from adenine: step 1/1. Its function is as follows. Catalyzes a salvage reaction resulting in the formation of AMP, that is energically less costly than de novo synthesis. The chain is Adenine phosphoribosyltransferase from Salinispora tropica (strain ATCC BAA-916 / DSM 44818 / JCM 13857 / NBRC 105044 / CNB-440).